Reading from the N-terminus, the 737-residue chain is Palmitoyltransferase akr1 (737 aa).

Residues 1–60 form a disordered region; sequence MSSGDPPSGLQASGSNSSAALGLSPPSAPSGKSAATPPKVATDDASVELSSMKSERSPAK. Over 1–314 the chain is Cytoplasmic; the sequence is MSSGDPPSGL…YVRDKAIMSK (314 aa). Residues 7–38 are compositionally biased toward low complexity; it reads PSGLQASGSNSSAALGLSPPSAPSGKSAATPP. 5 ANK repeats span residues 97 to 126, 131 to 160, 164 to 193, 197 to 226, and 230 to 259; these read EGITPLHWAAINNQYAMCKFLIDSGADVNA, SVATPAMWAAQRCHYYIVHLLLQYGADPLL, QGYNILHLATIDGNAFLLVLLLHQEIPVDV, QGHTGLMWAAYKGYPACVDLFLRWGANPNA, and GGLAPLHWALVKGSLPCVLKILEYGADRFA. 2 helical membrane-spanning segments follow: residues 315–335 and 336–356; these read FFFFWPFLLLFVVLWILSNMV and VYFAIPVAAVAVFGLQWVAKK. At 357-372 the chain is on the cytoplasmic side; sequence AASQGPSEFRIIQKTP. A helical transmembrane segment spans residues 373–393; it reads FLAGVFAGSLFWVFVRYVLYV. The Lumenal segment spans residues 394–402; sequence LPATYSTNP. Residues 403 to 423 form a helical membrane-spanning segment; the sequence is FLNLGFVVFFSLTTYFYFYSM. Residues 424 to 500 lie on the Cytoplasmic side of the membrane; that stretch reads VADPGYVPKL…NCVGVNNLRQ (77 aa). The DHHC domain occupies 456–506; it reads NFCVYCMIRRPLRSKHCRRCSRCVAKHDHHCPWIDNCVGVNNLRQFVLYIL. Cys486 (S-palmitoyl cysteine intermediate) is an active-site residue. The helical transmembrane segment at 501–521 threads the bilayer; the sequence is FVLYILCLEIGIILFLHLTFN. The Lumenal segment spans residues 522–549; that stretch reads YINGLPAPAEPICNILNDQICSFVLRDT. The chain crosses the membrane as a helical span at residues 550-570; it reads FTLLLDVWIAIQLVWVTMLGV. Topologically, residues 571–737 are cytoplasmic; it reads VQLVQVSRNQ…VAYDEAADIV (167 aa).

This sequence belongs to the DHHC palmitoyltransferase family. AKR/ZDHHC17 subfamily.

The protein localises to the early endosome membrane. It is found in the golgi apparatus membrane. It carries out the reaction L-cysteinyl-[protein] + hexadecanoyl-CoA = S-hexadecanoyl-L-cysteinyl-[protein] + CoA. In terms of biological role, palmitoyltransferase specific for casein kinase 1. In Emericella nidulans (strain FGSC A4 / ATCC 38163 / CBS 112.46 / NRRL 194 / M139) (Aspergillus nidulans), this protein is Palmitoyltransferase akr1 (akr1).